Consider the following 341-residue polypeptide: Glyceraldehyde-3-phosphate dehydrogenase 2 (341 aa).

Residues Arg12–Ile13, Arg78, and Thr120 each bind NAD(+). D-glyceraldehyde 3-phosphate is bound by residues Ser152 to Thr154 and Thr183. Catalysis depends on Cys153, which acts as the Nucleophile. Asn184 lines the NAD(+) pocket. Residues Arg198, Thr211–Gly212, and Arg234 each bind D-glyceraldehyde 3-phosphate. Residue Asn313 participates in NAD(+) binding.

Belongs to the glyceraldehyde-3-phosphate dehydrogenase family. In terms of assembly, homotetramer.

It is found in the cytoplasm. The enzyme catalyses D-glyceraldehyde 3-phosphate + phosphate + NAD(+) = (2R)-3-phospho-glyceroyl phosphate + NADH + H(+). It participates in carbohydrate degradation; glycolysis; pyruvate from D-glyceraldehyde 3-phosphate: step 1/5. In terms of biological role, catalyzes the oxidative phosphorylation of glyceraldehyde 3-phosphate (G3P) to 1,3-bisphosphoglycerate (BPG) using the cofactor NAD. The first reaction step involves the formation of a hemiacetal intermediate between G3P and a cysteine residue, and this hemiacetal intermediate is then oxidized to a thioester, with concomitant reduction of NAD to NADH. The reduced NADH is then exchanged with the second NAD, and the thioester is attacked by a nucleophilic inorganic phosphate to produce BPG. This is Glyceraldehyde-3-phosphate dehydrogenase 2 (gapA2) from Staphylococcus aureus (strain COL).